We begin with the raw amino-acid sequence, 310 residues long: tRNA-splicing endonuclease subunit Sen34 (310 aa).

The segment at 119–177 (GQAAKKQKLEQASGASSSQEAGSSQAAKEDETSDGQASGEQEEAGPSSSQAGPSNGVAP) is disordered. The segment covering 128-144 (EQASGASSSQEAGSSQA) has biased composition (low complexity). Catalysis depends on residues Tyr-247, His-255, and Lys-286.

The protein belongs to the tRNA-intron endonuclease family. As to quaternary structure, tRNA splicing endonuclease is a heterotetramer composed of TSEN2, TSEN15, TSEN34/LENG5 and TSEN54. tRNA splicing endonuclease complex also contains proteins of the pre-mRNA 3'-end processing machinery such as CLP1, CPSF1, CPSF4 and CSTF2.

The protein resides in the nucleus. It is found in the nucleolus. It catalyses the reaction pretRNA = a 3'-half-tRNA molecule with a 5'-OH end + a 5'-half-tRNA molecule with a 2',3'-cyclic phosphate end + an intron with a 2',3'-cyclic phosphate and a 5'-hydroxyl terminus.. Its function is as follows. Constitutes one of the two catalytic subunit of the tRNA-splicing endonuclease complex, a complex responsible for identification and cleavage of the splice sites in pre-tRNA. It cleaves pre-tRNA at the 5'- and 3'-splice sites to release the intron. The products are an intron and two tRNA half-molecules bearing 2',3'-cyclic phosphate and 5'-OH termini. There are no conserved sequences at the splice sites, but the intron is invariably located at the same site in the gene, placing the splice sites an invariant distance from the constant structural features of the tRNA body. It probably carries the active site for 3'-splice site cleavage. The tRNA splicing endonuclease is also involved in mRNA processing via its association with pre-mRNA 3'-end processing factors, establishing a link between pre-tRNA splicing and pre-mRNA 3'-end formation, suggesting that the endonuclease subunits function in multiple RNA-processing events. The chain is tRNA-splicing endonuclease subunit Sen34 (TSEN34) from Homo sapiens (Human).